A 164-amino-acid chain; its full sequence is Putative glutamine amidotransferase-like protein RP713 (164 aa).

The region spanning T39 to M164 is the Glutamine amidotransferase type-1 domain.

The chain is Putative glutamine amidotransferase-like protein RP713 from Rickettsia prowazekii (strain Madrid E).